Consider the following 435-residue polypeptide: Casein kinase 1-like protein 12 (435 aa).

One can recognise a Protein kinase domain in the interval 9–278 (YRLGRKIGSG…LKRIFRDLFI (270 aa)). ATP contacts are provided by residues 15 to 23 (IGSGSFGEI) and lysine 38. Residue aspartate 128 is the Proton acceptor of the active site. Disordered stretches follow at residues 313-363 (VGTS…RGPM) and 394-414 (LRNS…TRKH).

This sequence belongs to the protein kinase superfamily. CK1 Ser/Thr protein kinase family. Casein kinase I subfamily. In terms of assembly, monomer. In terms of processing, autophosphorylated.

It localises to the cytoplasm. It carries out the reaction L-seryl-[protein] + ATP = O-phospho-L-seryl-[protein] + ADP + H(+). It catalyses the reaction L-threonyl-[protein] + ATP = O-phospho-L-threonyl-[protein] + ADP + H(+). Casein kinases are operationally defined by their preferential utilization of acidic proteins such as caseins as substrates. It can phosphorylate a large number of proteins. This is Casein kinase 1-like protein 12 from Arabidopsis thaliana (Mouse-ear cress).